Here is a 102-residue protein sequence, read N- to C-terminus: UPF0213 protein XCC3072 (102 aa).

A GIY-YIG domain is found at 5–80 (KPWHLYLLLC…KQQPRARKLA (76 aa)).

Belongs to the UPF0213 family.

In Xanthomonas campestris pv. campestris (strain ATCC 33913 / DSM 3586 / NCPPB 528 / LMG 568 / P 25), this protein is UPF0213 protein XCC3072.